The primary structure comprises 788 residues: Bifunctional purine biosynthetic protein ADE1 (788 aa).

The segment at 1–430 is GARS; sequence MEPIIALLIG…DIAHHALNPK (430 aa). The 207-residue stretch at 115–321 folds into the ATP-grasp domain; it reads KDFMHRNNIP…LAEIILACVN (207 aa). An ATP-binding site is contributed by 141–202; the sequence is LDTCTFDVVI…EELLEGEELS (62 aa). Mg(2+) contacts are provided by Glu291 and Asn293. The interval 437–769 is AIRS; that stretch reads LTYENSGVSV…TVYRIGQLVD (333 aa).

The protein in the N-terminal section; belongs to the GARS family. It in the C-terminal section; belongs to the AIR synthase family. Requires Mg(2+) as cofactor. It depends on Mn(2+) as a cofactor.

Its subcellular location is the cytoplasm. It localises to the cytosol. The enzyme catalyses 5-phospho-beta-D-ribosylamine + glycine + ATP = N(1)-(5-phospho-beta-D-ribosyl)glycinamide + ADP + phosphate + H(+). The catalysed reaction is 2-formamido-N(1)-(5-O-phospho-beta-D-ribosyl)acetamidine + ATP = 5-amino-1-(5-phospho-beta-D-ribosyl)imidazole + ADP + phosphate + H(+). It functions in the pathway purine metabolism; IMP biosynthesis via de novo pathway; 5-amino-1-(5-phospho-D-ribosyl)imidazole from N(2)-formyl-N(1)-(5-phospho-D-ribosyl)glycinamide: step 2/2. It participates in purine metabolism; IMP biosynthesis via de novo pathway; N(1)-(5-phospho-D-ribosyl)glycinamide from 5-phospho-alpha-D-ribose 1-diphosphate: step 2/2. In terms of biological role, catalyzes the second and fifth step in the 'de novo' purine biosynthesis pathway; contains phosphoribosylamine--glycine ligase (GARS) and phosphoribosylformylglycinamidine cyclo-ligase (AIRS) activities. In Schizosaccharomyces pombe (strain 972 / ATCC 24843) (Fission yeast), this protein is Bifunctional purine biosynthetic protein ADE1.